The chain runs to 260 residues: Putative hydro-lyase Bmul_5125/BMULJ_03391 (260 aa).

Belongs to the D-glutamate cyclase family.

This Burkholderia multivorans (strain ATCC 17616 / 249) protein is Putative hydro-lyase Bmul_5125/BMULJ_03391.